Reading from the N-terminus, the 494-residue chain is Inosine-5'-monophosphate dehydrogenase (494 aa).

CBS domains are found at residues 93-154 and 158-217; these read IIRN…DEKI and MTTN…CKDS. NAD(+) contacts are provided by residues aspartate 251 and 301–303; that span reads GIG. K(+)-binding residues include glycine 303 and glycine 305. Position 306 (serine 306) interacts with IMP. A K(+)-binding site is contributed by cysteine 308. Residue cysteine 308 is the Thioimidate intermediate of the active site. IMP is bound by residues 341 to 343, 364 to 365, and 388 to 392; these read DGG, GS, and YRGMG. The active-site Proton acceptor is the arginine 406. An IMP-binding site is contributed by glutamate 421. K(+) contacts are provided by glutamate 475, serine 476, and histidine 477.

It belongs to the IMPDH/GMPR family. In terms of assembly, homotetramer. It depends on K(+) as a cofactor.

It carries out the reaction IMP + NAD(+) + H2O = XMP + NADH + H(+). It functions in the pathway purine metabolism; XMP biosynthesis via de novo pathway; XMP from IMP: step 1/1. Its activity is regulated as follows. Mycophenolic acid (MPA) is a non-competitive inhibitor that prevents formation of the closed enzyme conformation by binding to the same site as the amobile flap. In contrast, mizoribine monophosphate (MZP) is a competitive inhibitor that induces the closed conformation. MPA is a potent inhibitor of mammalian IMPDHs but a poor inhibitor of the bacterial enzymes. MZP is a more potent inhibitor of bacterial IMPDH. Its function is as follows. Catalyzes the conversion of inosine 5'-phosphate (IMP) to xanthosine 5'-phosphate (XMP), the first committed and rate-limiting step in the de novo synthesis of guanine nucleotides, and therefore plays an important role in the regulation of cell growth. This Chlorobaculum tepidum (strain ATCC 49652 / DSM 12025 / NBRC 103806 / TLS) (Chlorobium tepidum) protein is Inosine-5'-monophosphate dehydrogenase.